The chain runs to 305 residues: Ribonuclease BN (305 aa).

Residues His64, His66, Asp68, His69, His141, Asp212, and His270 each coordinate Zn(2+). The active-site Proton acceptor is Asp68.

It belongs to the RNase Z family. RNase BN subfamily. As to quaternary structure, homodimer. Zn(2+) serves as cofactor.

In terms of biological role, zinc phosphodiesterase, which has both exoribonuclease and endoribonuclease activities. This is Ribonuclease BN from Escherichia coli O127:H6 (strain E2348/69 / EPEC).